The sequence spans 42 residues: uncharacterized protein (42 aa).

Residues 18–38 (VGAISLTVMMILFFIAIVWFL) traverse the membrane as a helical segment.

Its subcellular location is the host membrane. This is an uncharacterized protein from His1 virus (isolate Australia/Victoria) (His1V).